The sequence spans 119 residues: Hemerythrin subunit A (119 aa).

7 residues coordinate Fe cation: His-26, His-55, Glu-59, His-74, His-78, His-107, and Asp-112.

The protein belongs to the hemerythrin family.

Functionally, hemerythrin is a respiratory protein in blood cells of certain marine worms. The oxygen-binding site in each chain contains two iron atoms. The sequence is that of Hemerythrin subunit A from Sipunculus nudus (Sipunculan worm).